The following is a 298-amino-acid chain: Cyclin-dependent kinase 2 homolog (298 aa).

The Protein kinase domain maps to tyrosine 4–phenylalanine 284. ATP is bound by residues isoleucine 10–valine 18 and lysine 32. Threonine 14 bears the Phosphothreonine mark. Phosphotyrosine is present on tyrosine 15. Aspartate 125 (proton acceptor) is an active-site residue. Position 158 is a phosphothreonine (threonine 158).

It belongs to the protein kinase superfamily. CMGC Ser/Thr protein kinase family. CDC2/CDKX subfamily. As to quaternary structure, may form a complex composed of at least the catalytic subunit CRK2 and a cyclin. It depends on Mg(2+) as a cofactor.

It localises to the cytoplasm. The enzyme catalyses L-seryl-[protein] + ATP = O-phospho-L-seryl-[protein] + ADP + H(+). It catalyses the reaction L-threonyl-[protein] + ATP = O-phospho-L-threonyl-[protein] + ADP + H(+). The catalysed reaction is [DNA-directed RNA polymerase] + ATP = phospho-[DNA-directed RNA polymerase] + ADP + H(+). With respect to regulation, phosphorylation at Thr-14 or Tyr-15 inactivates the enzyme, while phosphorylation at Thr-158 activates it. In terms of biological role, serine/threonine-protein kinase. Involved in the control of the cell cycle. Required for entry into S-phase and mitosis. Probable component of the kinase complex that phosphorylates the repetitive C-terminus of RNA polymerase II. This is Cyclin-dependent kinase 2 homolog from Theileria annulata.